The primary structure comprises 390 residues: Flagellar P-ring protein (390 aa).

The first 36 residues, 1-36 (MFFSRKIRSLLLTPKRRWSLILTLCLIFTGINFSTS), serve as a signal peptide directing secretion.

The protein belongs to the FlgI family. The basal body constitutes a major portion of the flagellar organelle and consists of four rings (L,P,S, and M) mounted on a central rod.

Its subcellular location is the periplasm. The protein resides in the bacterial flagellum basal body. In terms of biological role, assembles around the rod to form the L-ring and probably protects the motor/basal body from shearing forces during rotation. This chain is Flagellar P-ring protein, found in Desulfotalea psychrophila (strain LSv54 / DSM 12343).